The sequence spans 313 residues: Protein FixB (313 aa).

Residue 255-283 coordinates FAD; the sequence is LYLAVGISGQIQHMVGANASQTIFAINKD.

Belongs to the ETF alpha-subunit/FixB family. Heterodimer of FixA and FixB.

It functions in the pathway amine and polyamine metabolism; carnitine metabolism. Functionally, required for anaerobic carnitine reduction. May bring reductant to CaiA. The polypeptide is Protein FixB (Escherichia coli (strain SMS-3-5 / SECEC)).